The chain runs to 301 residues: Probable alpha-L-glutamate ligase (301 aa).

The 184-residue stretch at 104–287 folds into the ATP-grasp domain; the sequence is LQLLSRKGIG…VAGLIYEFIE (184 aa). Residues K141, 178-179, D187, and 211-213 each bind ATP; these read EF and RSN. Residues D248, E260, and N262 each coordinate Mg(2+). 3 residues coordinate Mn(2+): D248, E260, and N262.

Belongs to the RimK family. Mg(2+) is required as a cofactor. Mn(2+) serves as cofactor.

The protein is Probable alpha-L-glutamate ligase of Shewanella loihica (strain ATCC BAA-1088 / PV-4).